Reading from the N-terminus, the 152-residue chain is MLVSLGALRVLLGIFFTLTGAAKLFQVSAPVSQQMKALFEQFAEVFPLKVLGYQPDPISYQAAVGWLELLAGLLLVVGPPVLQQISNVLLILLMMGAVFTLVVLEESLSTYIPAVVCLGLLLLLDSCQFLVRTKGAVRCRNKIPGALGNPRK.

A signal peptide spans 1–21 (MLVSLGALRVLLGIFFTLTGA). The next 3 membrane-spanning stretches (helical) occupy residues 62–82 (AAVGWLELLAGLLLVVGPPVL), 85–105 (ISNVLLILLMMGAVFTLVVLE), and 111–131 (YIPAVVCLGLLLLLDSCQFLV).

It belongs to the DoxX family.

The protein resides in the membrane. The chain is Transmembrane protein 35B from Rattus norvegicus (Rat).